A 1231-amino-acid chain; its full sequence is Protein FAM193A (1231 aa).

The stretch at 106-142 (CTEDMYSTLLQRYQRSEEELRKVAEEWLECQKRIDAY) forms a coiled coil. The disordered stretch occupies residues 249-272 (DYLSEMRPPSVSSASSGSGSSSPI). Residues 258–270 (SVSSASSGSGSSS) show a composition bias toward low complexity. Serine 293 carries the post-translational modification Phosphoserine. 5 disordered regions span residues 331–405 (NGGG…QAEQ), 633–703 (QSSS…APSF), 719–789 (SFCP…NQKE), 826–845 (LTKR…EREG), and 860–1174 (NSSE…SSLD). Acidic residues predominate over residues 355–365 (EADDEDADGES). A Phosphoserine modification is found at serine 648. Over residues 676 to 691 (LAPLPALSPSALSPAS) the composition is skewed to low complexity. The segment covering 761 to 773 (QQDDGDESADEDS) has biased composition (acidic residues). Low complexity predominate over residues 776–785 (EHSSSTSTST). Residues 872 to 881 (AAKRARHKQR) show a composition bias toward basic residues. The stretch at 877-973 (RHKQRKLEEK…ATESISNSEN (97 aa)) forms a coiled coil. The segment covering 882-909 (KLEEKARLEAEARAREHLHHQEEQKQRE) has biased composition (basic and acidic residues). The span at 910–920 (EEEDEEEEDEE) shows a compositional bias: acidic residues. Over residues 921 to 935 (QHFKEEFQRLQELQK) the composition is skewed to basic and acidic residues. A compositionally biased stretch (basic residues) spans 937-946 (RAAKKKKKDR). Residues 962–979 (QAATESISNSENIHNGSL) are compositionally biased toward polar residues. Phosphoserine is present on residues serine 1136 and serine 1151. Residues 1156 to 1166 (GKNKKNKKKKG) show a composition bias toward basic residues.

The protein belongs to the FAM193 family.

The polypeptide is Protein FAM193A (Fam193a) (Mus musculus (Mouse)).